Reading from the N-terminus, the 194-residue chain is Histone H1 (194 aa).

A1 carries the post-translational modification N-acetylalanine; partial. Low complexity predominate over residues 1-14 (AEVAPAPAAAAPAK). 2 disordered regions span residues 1 to 31 (AEVA…GPAV) and 105 to 194 (AKKP…AAKK). The span at 15-26 (APKKKAAAKPKK) shows a compositional bias: basic residues. Residues 27–100 (SGPAVGELAG…GASGSFKLNK (74 aa)) enclose the H15 domain. A compositionally biased stretch (basic residues) spans 116–194 (KAKKVAAKKP…KVKKPAAAKK (79 aa)). S145, S161, and S182 each carry phosphoserine.

Belongs to the histone H1/H5 family.

It localises to the nucleus. Its subcellular location is the chromosome. In terms of biological role, histones H1 are necessary for the condensation of nucleosome chains into higher-order structures. In Salmo trutta (Brown trout), this protein is Histone H1.